A 182-amino-acid polypeptide reads, in one-letter code: UPF0316 protein BCAH820_3389 (182 aa).

3 helical membrane passes run 6-26 (LIFV…ILLV), 32-52 (SAAA…GIVF), and 58-78 (WMNI…GGYI).

The protein belongs to the UPF0316 family.

It is found in the cell membrane. This is UPF0316 protein BCAH820_3389 from Bacillus cereus (strain AH820).